A 601-amino-acid polypeptide reads, in one-letter code: MALSFFGGGGASHLKYFDIRLDEDYIVFRGGEQEAASAQLSGKLLLCLSEPLSAKHVRLNLTGISRVCWHLPSSSASGGRKSWREKVFYEKSWTFRDAGKSKTEILAAGNYEFPFHVILEGSMPESVEGLSDTYVTYRFKAEIGRKYAKDIVVRKPLRIIRTLDSSALELSHAMSVENIWPNKIEYSISTPTKAVIFGTSIRVDFKLIPLLKGLKIGQIVSQLIESHDLTLNPEDPDSVRNTYKNTRTIVNDEHELDEENNLEIIDEAAEGYQFSRFLDLPKTLTRCLQDTDTRGIKIRHKLKFRVQLLNPDGHISELRATLPVSIFISPNLAIDDNNNLVDQTPQSAQRAVNDLAQQAPPLYGEHQFDQLYSEVDPSGYRTPGPGSGPGTPFGTLSRNLSAENLASMNALTNTDISASALHSRLSNLHASRFSNPSPADTDGHTDVEHRRLGVSADYFGPSSGSNSHSPASPELSRRPSDEGYHDHDHIPSGMATPFHPQFAEVESLSRVPSYSTAVRSTVGPCDSELPDYQAVVAEDTAMPTLQSPQQAHIRSAGRGASTGHTGIDVHHLRSGLFNSRTSAHHDDDDRRLRLVQARARV.

Disordered regions lie at residues 374–397 and 455–489; these read EVDP…GTLS and SADY…DHDH. The segment covering 461 to 473 has biased composition (low complexity); the sequence is PSSGSNSHSPASP. Positions 475–489 are enriched in basic and acidic residues; sequence LSRRPSDEGYHDHDH.

This sequence belongs to the arrestin family. In terms of assembly, interacts with hulA.

Functionally, component of the regulatory network controlling carbon source utilization through ubiquitination and deubiquitination involving creA, creB, creC, creD and acrB. May be involved in signaling by recognizing appropriately phosphorylated substrates via its arrestin domains and then recruit a HECT-type ubiquitin ligase such as hulA, leading to ubiquitination of the substrate, providing a link between ubiquitination and phosphorylation in protein regulation and stability. The polypeptide is Probable HECT-type ubiquitin ligase-interacting protein creD (creD) (Neosartorya fischeri (strain ATCC 1020 / DSM 3700 / CBS 544.65 / FGSC A1164 / JCM 1740 / NRRL 181 / WB 181) (Aspergillus fischerianus)).